The sequence spans 138 residues: Type II secretion system protein I (138 aa).

Residues 1–6 constitute a propeptide, leader sequence; the sequence is MKHQRG. Tyr-7 carries the post-translational modification N-methyltyrosine. A helical membrane pass occupies residues 7 to 29; the sequence is YSLIEVIVAFALLALALTLLLGS.

It belongs to the GSP I family. Type II secretion is composed of four main components: the outer membrane complex, the inner membrane complex, the cytoplasmic secretion ATPase and the periplasm-spanning pseudopilus. Interacts with core component XpsG. In terms of processing, cleaved by prepilin peptidase. Methylated by prepilin peptidase at the amino group of the N-terminal tyrosine once the leader sequence is cleaved by prepilin peptidase.

The protein localises to the cell inner membrane. Functionally, component of the type II secretion system required for the energy-dependent secretion of extracellular factors such as proteases and toxins from the periplasm. Part of the pseudopilus tip complex that is critical for the recognition and binding of secretion substrates. This chain is Type II secretion system protein I (xpsI), found in Xanthomonas campestris pv. campestris (strain ATCC 33913 / DSM 3586 / NCPPB 528 / LMG 568 / P 25).